A 110-amino-acid polypeptide reads, in one-letter code: UPF0122 protein SaurJH9_1295 (110 aa).

The protein belongs to the UPF0122 family.

Might take part in the signal recognition particle (SRP) pathway. This is inferred from the conservation of its genetic proximity to ftsY/ffh. May be a regulatory protein. This Staphylococcus aureus (strain JH9) protein is UPF0122 protein SaurJH9_1295.